The primary structure comprises 338 residues: Heme A synthase (338 aa).

The next 5 helical transmembrane spans lie at 6 to 26, 93 to 113, 118 to 138, 154 to 174, and 201 to 221; these read ITKW…IGGI, GRIT…KGII, IAPY…GWYM, LAFH…QLIK, and VIYL…GLIY. Residue His256 coordinates heme. 3 helical membrane-spanning segments follow: residues 258-278, 285-305, and 308-328; these read LGGY…LKIE, IAYF…ITLL, and VPII…SVII. Position 316 (His316) interacts with heme.

Belongs to the COX15/CtaA family. Type 2 subfamily. Interacts with CtaB. Heme b is required as a cofactor.

The protein resides in the cell membrane. It catalyses the reaction Fe(II)-heme o + 2 A + H2O = Fe(II)-heme a + 2 AH2. Its pathway is porphyrin-containing compound metabolism; heme A biosynthesis; heme A from heme O: step 1/1. Its function is as follows. Catalyzes the conversion of heme O to heme A by two successive hydroxylations of the methyl group at C8. The first hydroxylation forms heme I, the second hydroxylation results in an unstable dihydroxymethyl group, which spontaneously dehydrates, resulting in the formyl group of heme A. This chain is Heme A synthase, found in Rickettsia canadensis (strain McKiel).